Here is a 1363-residue protein sequence, read N- to C-terminus: DNA-directed RNA polymerase subunit beta (1363 aa).

It belongs to the RNA polymerase beta chain family. In terms of assembly, the RNAP catalytic core consists of 2 alpha, 1 beta, 1 beta' and 1 omega subunit. When a sigma factor is associated with the core the holoenzyme is formed, which can initiate transcription.

The catalysed reaction is RNA(n) + a ribonucleoside 5'-triphosphate = RNA(n+1) + diphosphate. Functionally, DNA-dependent RNA polymerase catalyzes the transcription of DNA into RNA using the four ribonucleoside triphosphates as substrates. The protein is DNA-directed RNA polymerase subunit beta of Syntrophus aciditrophicus (strain SB).